Here is a 603-residue protein sequence, read N- to C-terminus: ADP-ribosylation factor-binding protein GGA2 (603 aa).

The tract at residues 1–22 (MAATAVAAGTGSPAGTESAEGG) is disordered. The segment covering 13–22 (PAGTESAEGG) has biased composition (low complexity). In terms of domain architecture, VHS spans 36 to 166 (ATDPSMAEQD…MLKKQGIIKQ (131 aa)). The GAT domain occupies 190-317 (DEEKSKLLTR…GVRLYKQVVE (128 aa)). Positions 318 to 473 (GRVSAGNAVP…VFVPLESVKP (156 aa)) are unstructured hinge. The 122-residue stretch at 474–595 (SSLPPIVVYD…SEVGEVKDFP (122 aa)) folds into the GAE domain.

This sequence belongs to the GGA protein family. In terms of assembly, monomer. Interacts with NECAP1, TSG101, UBC and AFTPH/aftiphilin. Interacts with CNST. Interacts with GGA1 and GGA3. Binds to clathrin and activated ARFs, such as ARF1, ARF5 and ARF6. Binds RABEP1 and RABGEF1. Interacts with the type-I membrane proteins LRP3, M6PR/CD-MPR, IGF2R/CI-MPR and BACE1. Interacts (via N-terminal VHS domain) with SORL1/sorLA and SORT1 (via C-terminal cytosolic domain). Binds the accessory proteins CCDC91, P200, SYNRG, EPN4 and NECAP2. Interacts with ADRA2B. Interacts (via VHS domain) with PIK4B; the interaction is important for PIK4B location at the Golgi apparatus membrane. Ubiquitinated.

Its subcellular location is the golgi apparatus. It is found in the trans-Golgi network membrane. It localises to the endosome membrane. The protein localises to the early endosome membrane. Its function is as follows. Plays a role in protein sorting and trafficking between the trans-Golgi network (TGN) and endosomes. Mediates the ARF-dependent recruitment of clathrin to the TGN and binds ubiquitinated proteins and membrane cargo molecules with a cytosolic acidic cluster-dileucine (DXXLL) motif. Mediates export of the GPCR receptor ADRA2B to the cell surface. Regulates retrograde transport of phosphorylated form of BACE1 from endosomes to the trans-Golgi network. This Mus musculus (Mouse) protein is ADP-ribosylation factor-binding protein GGA2 (Gga2).